We begin with the raw amino-acid sequence, 183 residues long: uncharacterized protein (183 aa).

Over residues Y105–S149 the composition is skewed to low complexity. Residues Y105 to I151 form a disordered region.

This is an uncharacterized protein from Dictyostelium discoideum (Social amoeba).